Here is a 217-residue protein sequence, read N- to C-terminus: Fucoxanthin-chlorophyll a-c binding protein B, chloroplastic (217 aa).

A chloroplast-targeting transit peptide spans 1-39 (MKSAVMAVACAAAPGFRGPSAFNGAALTTSAKACSAMKM). The next 3 membrane-spanning stretches (helical) occupy residues 81-101 (IAML…PGML), 122-142 (IPPA…LAVM), and 183-203 (GRAA…NNKP).

The protein belongs to the fucoxanthin chlorophyll protein family. The LHC complex of chromophytic algae is composed of fucoxanthin, chlorophyll A and C bound non-covalently by fucoxanthin chlorophyll proteins (FCPs). The ratio of pigments in this LHC is; fucoxanthin: chlorophyll C: chlorophyll A; (0.6-1): (0.1-0.3): (1).

It is found in the plastid. The protein localises to the chloroplast thylakoid membrane. Its function is as follows. The light-harvesting complex (LHC) functions as a light receptor, it captures and delivers excitation energy to photosystems with which it is closely associated. Energy is transferred from the carotenoid and chlorophyll C (or B) to chlorophyll A and the photosynthetic reaction centers where it is used to synthesize ATP and reducing power. The sequence is that of Fucoxanthin-chlorophyll a-c binding protein B, chloroplastic (FCPB) from Macrocystis pyrifera (Giant kelp).